The sequence spans 72 residues: Translation initiation factor IF-1 (72 aa).

One can recognise an S1-like domain in the interval 1–72 (MARDDVIEVD…DKGRITFRYK (72 aa)).

The protein belongs to the IF-1 family. As to quaternary structure, component of the 30S ribosomal translation pre-initiation complex which assembles on the 30S ribosome in the order IF-2 and IF-3, IF-1 and N-formylmethionyl-tRNA(fMet); mRNA recruitment can occur at any time during PIC assembly.

The protein localises to the cytoplasm. In terms of biological role, one of the essential components for the initiation of protein synthesis. Stabilizes the binding of IF-2 and IF-3 on the 30S subunit to which N-formylmethionyl-tRNA(fMet) subsequently binds. Helps modulate mRNA selection, yielding the 30S pre-initiation complex (PIC). Upon addition of the 50S ribosomal subunit IF-1, IF-2 and IF-3 are released leaving the mature 70S translation initiation complex. This chain is Translation initiation factor IF-1, found in Helicobacter pylori (strain HPAG1).